The primary structure comprises 166 residues: Protein FAM89A (166 aa).

The protein belongs to the FAM89 family.

This chain is Protein FAM89A (fam89a), found in Xenopus laevis (African clawed frog).